Consider the following 146-residue polypeptide: Large ribosomal subunit protein uL15 (146 aa).

Residues 1 to 56 (MKLHELKAAEGANKASKRVGRGTGSGLGKTSGKGQNGQNSRSGGGVRPGFEGGQMP) form a disordered region. 2 stretches are compositionally biased toward gly residues: residues 21-35 (RGTG…GKGQ) and 42-52 (SGGGVRPGFEG).

It belongs to the universal ribosomal protein uL15 family. In terms of assembly, part of the 50S ribosomal subunit.

Binds to the 23S rRNA. The chain is Large ribosomal subunit protein uL15 from Clostridium botulinum (strain Langeland / NCTC 10281 / Type F).